The sequence spans 378 residues: Branched-chain-amino-acid aminotransferase (378 aa).

An N6-(pyridoxal phosphate)lysine modification is found at Lys213.

The protein belongs to the class-IV pyridoxal-phosphate-dependent aminotransferase family. As to quaternary structure, homodimer. It depends on pyridoxal 5'-phosphate as a cofactor.

It catalyses the reaction L-leucine + 2-oxoglutarate = 4-methyl-2-oxopentanoate + L-glutamate. The enzyme catalyses L-isoleucine + 2-oxoglutarate = (S)-3-methyl-2-oxopentanoate + L-glutamate. It carries out the reaction L-valine + 2-oxoglutarate = 3-methyl-2-oxobutanoate + L-glutamate. Its function is as follows. Catalyzes the first reaction in the catabolism of the essential branched chain amino acids leucine, isoleucine, and valine. The sequence is that of Branched-chain-amino-acid aminotransferase (bcaA) from Dictyostelium discoideum (Social amoeba).